A 623-amino-acid polypeptide reads, in one-letter code: V-type proton ATPase catalytic subunit A (623 aa).

252 to 259 (GAFGCGKT) contacts ATP.

It belongs to the ATPase alpha/beta chains family. As to quaternary structure, V-ATPase is a heteromultimeric enzyme composed of a peripheral catalytic V1 complex (main components: subunits A, B, C, D, E, and F) attached to an integral membrane V0 proton pore complex (main component: the proteolipid protein).

The catalysed reaction is ATP + H2O + 4 H(+)(in) = ADP + phosphate + 5 H(+)(out). Functionally, catalytic subunit of the peripheral V1 complex of vacuolar ATPase. V-ATPase vacuolar ATPase is responsible for acidifying a variety of intracellular compartments in eukaryotic cells. This is V-type proton ATPase catalytic subunit A from Beta vulgaris (Sugar beet).